The primary structure comprises 65 residues: MPKMKTNRASAKRFKKTASGGFKAGQAFTSHRFHGKTKKQRRQLRGTAMMNKVNVKRYAKILSNL.

The interval Met1–Gln26 is disordered.

This sequence belongs to the bacterial ribosomal protein bL35 family.

The protein is Large ribosomal subunit protein bL35 of Oenococcus oeni (strain ATCC BAA-331 / PSU-1).